Reading from the N-terminus, the 306-residue chain is Ribosomal protein L11 methyltransferase (306 aa).

4 residues coordinate S-adenosyl-L-methionine: Thr154, Gly179, Asp201, and Asn242.

Belongs to the methyltransferase superfamily. PrmA family.

It is found in the cytoplasm. The catalysed reaction is L-lysyl-[protein] + 3 S-adenosyl-L-methionine = N(6),N(6),N(6)-trimethyl-L-lysyl-[protein] + 3 S-adenosyl-L-homocysteine + 3 H(+). In terms of biological role, methylates ribosomal protein L11. The polypeptide is Ribosomal protein L11 methyltransferase (Xanthomonas euvesicatoria pv. vesicatoria (strain 85-10) (Xanthomonas campestris pv. vesicatoria)).